The following is a 348-amino-acid chain: Nicotinate-nucleotide pyrophosphorylase [carboxylating], chloroplastic (348 aa).

Residues M1 to S41 constitute a chloroplast transit peptide. Substrate is bound by residues R139, T170–K172, R194, K204, E237, D264, S296–N298, and S317–A319.

This sequence belongs to the NadC/ModD family.

It localises to the plastid. Its subcellular location is the chloroplast. It carries out the reaction nicotinate beta-D-ribonucleotide + CO2 + diphosphate = quinolinate + 5-phospho-alpha-D-ribose 1-diphosphate + 2 H(+). Its pathway is cofactor biosynthesis; NAD(+) biosynthesis; nicotinate D-ribonucleotide from quinolinate: step 1/1. Its function is as follows. Involved in the biosynthesis of NAD(+). Catalyzes the conversion of quinolate to nicotinate to nicotinate beta-D-ribonucleotide. This chain is Nicotinate-nucleotide pyrophosphorylase [carboxylating], chloroplastic, found in Arabidopsis thaliana (Mouse-ear cress).